Reading from the N-terminus, the 122-residue chain is Large ribosomal subunit protein uL14 (122 aa).

Belongs to the universal ribosomal protein uL14 family. As to quaternary structure, part of the 50S ribosomal subunit. Forms a cluster with proteins L3 and L19. In the 70S ribosome, L14 and L19 interact and together make contacts with the 16S rRNA in bridges B5 and B8.

In terms of biological role, binds to 23S rRNA. Forms part of two intersubunit bridges in the 70S ribosome. In Protochlamydia amoebophila (strain UWE25), this protein is Large ribosomal subunit protein uL14.